The following is a 102-amino-acid chain: uncharacterized protein (102 aa).

Residues methionine 1–lysine 41 are disordered.

This sequence to the N-terminal of nitrogenase iron protein (NifH). Has lost the ATP-binding site.

Its function is as follows. This protein is either not expressed, expressed at low levels or rapidly degraded. This is an uncharacterized protein from Rhizobium meliloti (Ensifer meliloti).